The chain runs to 180 residues: Dual-action ribosomal maturation protein DarP (180 aa).

This sequence belongs to the DarP family.

It localises to the cytoplasm. In terms of biological role, member of a network of 50S ribosomal subunit biogenesis factors which assembles along the 30S-50S interface, preventing incorrect 23S rRNA structures from forming. Promotes peptidyl transferase center (PTC) maturation. This chain is Dual-action ribosomal maturation protein DarP, found in Pasteurella multocida (strain Pm70).